A 37-amino-acid chain; its full sequence is Natriuretic peptide PNP (37 aa).

A disulfide bond links Cys14 and Cys30.

In terms of tissue distribution, expressed by the venom gland.

It localises to the secreted. Its function is as follows. Increases urine flow and decreases blood pressure when administered to rats by intravenous injection. Inhibits thrombin-induced platelet aggregation. Stimulates cGMP production via the natriuretic peptide receptor-A (NPR1). This is Natriuretic peptide PNP from Pseudocerastes persicus (Persian horned viper).